A 180-amino-acid polypeptide reads, in one-letter code: Large ribosomal subunit protein uL5 (180 aa).

The protein belongs to the universal ribosomal protein uL5 family. As to quaternary structure, part of the 50S ribosomal subunit; part of the 5S rRNA/L5/L18/L25 subcomplex. Contacts the 5S rRNA and the P site tRNA. Forms a bridge to the 30S subunit in the 70S ribosome.

Its function is as follows. This is one of the proteins that bind and probably mediate the attachment of the 5S RNA into the large ribosomal subunit, where it forms part of the central protuberance. In the 70S ribosome it contacts protein S13 of the 30S subunit (bridge B1b), connecting the 2 subunits; this bridge is implicated in subunit movement. Contacts the P site tRNA; the 5S rRNA and some of its associated proteins might help stabilize positioning of ribosome-bound tRNAs. The chain is Large ribosomal subunit protein uL5 from Lactococcus lactis subsp. lactis (strain IL1403) (Streptococcus lactis).